A 121-amino-acid chain; its full sequence is Small ribosomal subunit protein uS13 (121 aa).

A disordered region spans residues 97 to 121 (VRGQRTRTNARTRRGARKTVAGKKK). Basic residues predominate over residues 100-121 (QRTRTNARTRRGARKTVAGKKK).

It belongs to the universal ribosomal protein uS13 family. In terms of assembly, part of the 30S ribosomal subunit. Forms a loose heterodimer with protein S19. Forms two bridges to the 50S subunit in the 70S ribosome.

In terms of biological role, located at the top of the head of the 30S subunit, it contacts several helices of the 16S rRNA. In the 70S ribosome it contacts the 23S rRNA (bridge B1a) and protein L5 of the 50S subunit (bridge B1b), connecting the 2 subunits; these bridges are implicated in subunit movement. Contacts the tRNAs in the A and P-sites. In Prochlorococcus marinus (strain MIT 9303), this protein is Small ribosomal subunit protein uS13.